Reading from the N-terminus, the 352-residue chain is Phosphoribosylformylglycinamidine cyclo-ligase (352 aa).

It belongs to the AIR synthase family.

It localises to the cytoplasm. The catalysed reaction is 2-formamido-N(1)-(5-O-phospho-beta-D-ribosyl)acetamidine + ATP = 5-amino-1-(5-phospho-beta-D-ribosyl)imidazole + ADP + phosphate + H(+). The protein operates within purine metabolism; IMP biosynthesis via de novo pathway; 5-amino-1-(5-phospho-D-ribosyl)imidazole from N(2)-formyl-N(1)-(5-phospho-D-ribosyl)glycinamide: step 2/2. The chain is Phosphoribosylformylglycinamidine cyclo-ligase from Saccharophagus degradans (strain 2-40 / ATCC 43961 / DSM 17024).